Here is a 141-residue protein sequence, read N- to C-terminus: ATP synthase epsilon chain (141 aa).

It belongs to the ATPase epsilon chain family. As to quaternary structure, F-type ATPases have 2 components, CF(1) - the catalytic core - and CF(0) - the membrane proton channel. CF(1) has five subunits: alpha(3), beta(3), gamma(1), delta(1), epsilon(1). CF(0) has three main subunits: a, b and c.

The protein localises to the cell inner membrane. Its function is as follows. Produces ATP from ADP in the presence of a proton gradient across the membrane. The polypeptide is ATP synthase epsilon chain (Burkholderia mallei (strain NCTC 10247)).